The following is a 407-amino-acid chain: NADH dehydrogenase [ubiquinone] 1 alpha subcomplex subunit 10, mitochondrial (407 aa).

The transit peptide at 1 to 60 directs the protein to the mitochondrion; the sequence is MTAVFRVGLVRLVSRATQSPNLLQAQTNALPAAFQQRCSISGKTMRGGPRVPKAAPYPYK.

Belongs to the complex I NDUFA10 subunit family. Complex I is composed of 45 different subunits. This a component of the hydrophobic protein fraction. Forms a complex including sicily, ND-42 and Hsp83; the complex is necessary to chaperone ND-42 in the cytoplasm before mitochondrial import; the interaction between sicily and ND-42 is direct and occurs preferably between the unprocessed forms in the cytoplasm. It depends on FAD as a cofactor. As to expression, expressed in muscles (at protein level).

It localises to the mitochondrion matrix. The protein localises to the cytoplasm. In terms of biological role, accessory subunit of the mitochondrial membrane respiratory chain NADH dehydrogenase (Complex I), that is believed not to be involved in catalysis. Complex I functions in the transfer of electrons from NADH to the respiratory chain. The immediate electron acceptor for the enzyme is believed to be ubiquinone. In Drosophila melanogaster (Fruit fly), this protein is NADH dehydrogenase [ubiquinone] 1 alpha subcomplex subunit 10, mitochondrial.